We begin with the raw amino-acid sequence, 471 residues long: Probable nucleoredoxin 3 (471 aa).

Thioredoxin domains lie at 15-173 and 179-334; these read VSIP…ARRQ and QLLG…KERD.

It belongs to the nucleoredoxin family.

The enzyme catalyses [protein]-dithiol + NAD(+) = [protein]-disulfide + NADH + H(+). It catalyses the reaction [protein]-dithiol + NADP(+) = [protein]-disulfide + NADPH + H(+). In terms of biological role, probable thiol-disulfide oxidoreductase that may participate in various redox reactions. The polypeptide is Probable nucleoredoxin 3 (Oryza sativa subsp. japonica (Rice)).